The primary structure comprises 739 residues: NAD(P)H-quinone oxidoreductase subunit 5, chloroplastic (739 aa).

A run of 16 helical transmembrane segments spans residues W9–F29, W40–I60, I89–I109, F125–I145, I147–T167, G185–F205, N219–A239, T258–A278, V286–A306, L327–I347, A354–S374, I396–S416, W425–Y445, L543–F563, V602–I622, and S717–F737.

It belongs to the complex I subunit 5 family. As to quaternary structure, NDH is composed of at least 16 different subunits, 5 of which are encoded in the nucleus.

The protein localises to the plastid. Its subcellular location is the chloroplast thylakoid membrane. The enzyme catalyses a plastoquinone + NADH + (n+1) H(+)(in) = a plastoquinol + NAD(+) + n H(+)(out). It carries out the reaction a plastoquinone + NADPH + (n+1) H(+)(in) = a plastoquinol + NADP(+) + n H(+)(out). NDH shuttles electrons from NAD(P)H:plastoquinone, via FMN and iron-sulfur (Fe-S) centers, to quinones in the photosynthetic chain and possibly in a chloroplast respiratory chain. The immediate electron acceptor for the enzyme in this species is believed to be plastoquinone. Couples the redox reaction to proton translocation, and thus conserves the redox energy in a proton gradient. The sequence is that of NAD(P)H-quinone oxidoreductase subunit 5, chloroplastic (ndhF) from Solanum tuberosum (Potato).